Here is a 430-residue protein sequence, read N- to C-terminus: Serine hydroxymethyltransferase (430 aa).

Residues Leu-123 and 127-129 contribute to the (6S)-5,6,7,8-tetrahydrofolate site; that span reads GHL. Residue Lys-232 is modified to N6-(pyridoxal phosphate)lysine. Glu-248 provides a ligand contact to (6S)-5,6,7,8-tetrahydrofolate.

Belongs to the SHMT family. In terms of assembly, homodimer. It depends on pyridoxal 5'-phosphate as a cofactor.

Its subcellular location is the cytoplasm. It catalyses the reaction (6R)-5,10-methylene-5,6,7,8-tetrahydrofolate + glycine + H2O = (6S)-5,6,7,8-tetrahydrofolate + L-serine. Its pathway is one-carbon metabolism; tetrahydrofolate interconversion. It functions in the pathway amino-acid biosynthesis; glycine biosynthesis; glycine from L-serine: step 1/1. Functionally, catalyzes the reversible interconversion of serine and glycine with tetrahydrofolate (THF) serving as the one-carbon carrier. This reaction serves as the major source of one-carbon groups required for the biosynthesis of purines, thymidylate, methionine, and other important biomolecules. Also exhibits THF-independent aldolase activity toward beta-hydroxyamino acids, producing glycine and aldehydes, via a retro-aldol mechanism. The protein is Serine hydroxymethyltransferase of Anaplasma marginale (strain Florida).